Reading from the N-terminus, the 502-residue chain is Glutamate--tRNA ligase (502 aa).

The short motif at 9-19 (PSPTGDPHVGT) is the 'HIGH' region element. Zn(2+)-binding residues include Cys106, Cys108, Cys133, and His135. The short motif at 250–254 (KLSKR) is the 'KMSKS' region element. Lys253 serves as a coordination point for ATP.

This sequence belongs to the class-I aminoacyl-tRNA synthetase family. Glutamate--tRNA ligase type 1 subfamily. In terms of assembly, monomer. Zn(2+) is required as a cofactor.

It localises to the cytoplasm. The enzyme catalyses tRNA(Glu) + L-glutamate + ATP = L-glutamyl-tRNA(Glu) + AMP + diphosphate. Functionally, catalyzes the attachment of glutamate to tRNA(Glu) in a two-step reaction: glutamate is first activated by ATP to form Glu-AMP and then transferred to the acceptor end of tRNA(Glu). This is Glutamate--tRNA ligase from Protochlamydia amoebophila (strain UWE25).